The primary structure comprises 116 residues: Peptidyl-tRNA hydrolase (116 aa).

This sequence belongs to the PTH2 family.

It localises to the cytoplasm. It catalyses the reaction an N-acyl-L-alpha-aminoacyl-tRNA + H2O = an N-acyl-L-amino acid + a tRNA + H(+). Its function is as follows. The natural substrate for this enzyme may be peptidyl-tRNAs which drop off the ribosome during protein synthesis. This is Peptidyl-tRNA hydrolase from Methanococcus maripaludis (strain C6 / ATCC BAA-1332).